A 549-amino-acid polypeptide reads, in one-letter code: Glucose-6-phosphate isomerase (549 aa).

The active-site Proton donor is Glu355. Catalysis depends on residues His387 and Lys515.

Belongs to the GPI family.

Its subcellular location is the cytoplasm. The catalysed reaction is alpha-D-glucose 6-phosphate = beta-D-fructose 6-phosphate. Its pathway is carbohydrate biosynthesis; gluconeogenesis. It participates in carbohydrate degradation; glycolysis; D-glyceraldehyde 3-phosphate and glycerone phosphate from D-glucose: step 2/4. Catalyzes the reversible isomerization of glucose-6-phosphate to fructose-6-phosphate. This is Glucose-6-phosphate isomerase from Histophilus somni (strain 2336) (Haemophilus somnus).